The primary structure comprises 386 residues: MVVAMDQRTNVNGDPGAGDRKKEERFDPSAQPPFKIGDIRAAIPKHCWVKSPLRSMSYVVRDIIAVAALAIAAVYVDSWFLWPLYWAAQGTLFWAIFVLGHDCGHGSFSDIPLLNSVVGHILHSFILVPYHGWRISHRTHHQNHGHVENDESWVPLPERVYKKLPHSTRMLRYTVPLPMLAYPLYLCYRSPGKEGSHFNPYSSLFAPSERKLIATSTTCWSIMFVSLIALSFVFGPLAVLKVYGVPYIIFVMWLDAVTYLHHHGHDEKLPWYRGKEWSYLRGGLTTIDRDYGIFNNIHHDIGTHVIHHLFPQIPHYHLVDATKAAKHVLGRYYREPKTSGAIPIHLVESLVASIKKDHYVSDTGDIVFYETDPDLYVYASDKSKIN.

Residues 1-30 form a disordered region; sequence MVVAMDQRTNVNGDPGAGDRKKEERFDPSA. The span at 17–27 shows a compositional bias: basic and acidic residues; that stretch reads AGDRKKEERFD. The chain crosses the membrane as a helical span at residues 63–83; sequence IIAVAALAIAAVYVDSWFLWP. The Histidine box-1 signature appears at 101 to 105; sequence HDCGH. The Histidine box-2 signature appears at 137–141; that stretch reads HRTHH. The next 2 helical transmembrane spans lie at 220–240 and 242–262; these read WSIM…LAVL and VYGV…YLHH. A Histidine box-3 motif is present at residues 304-308; that stretch reads HVIHH.

This sequence belongs to the fatty acid desaturase type 1 family. Abundant in leaves and seedlings. Barely detectable in root tissue.

Its subcellular location is the endoplasmic reticulum membrane. It carries out the reaction a (9Z,12Z)-octadecadienoyl-containing glycerolipid + 2 Fe(II)-[cytochrome b5] + O2 + 2 H(+) = (9Z,12Z,15Z)-octadecatrienoyl-containing glycerolipid + 2 Fe(III)-[cytochrome b5] + 2 H2O. It participates in lipid metabolism; polyunsaturated fatty acid biosynthesis. Microsomal (ER) omega-3 fatty acid desaturase introduces the third double bond in the biosynthesis of 18:3 fatty acids, important constituents of plant membranes. It is thought to use cytochrome b5 as an electron donor and to act on fatty acids esterified to phosphatidylcholine and, possibly, other phospholipids. The sequence is that of Acyl-lipid omega-3 desaturase (cytochrome b5), endoplasmic reticulum from Arabidopsis thaliana (Mouse-ear cress).